Consider the following 206-residue polypeptide: Phosphoserine phosphatase (206 aa).

Catalysis depends on Asp7, which acts as the Nucleophile. Residues Asp7 and Asp9 each coordinate Mg(2+). The active-site Proton donor is the Asp9. Residues Glu16, Arg52, 95 to 96 (SG), and Lys140 contribute to the substrate site. Asp163 lines the Mg(2+) pocket. A substrate-binding site is contributed by Asn166.

The protein belongs to the HAD-like hydrolase superfamily. SerB family. It depends on Mg(2+) as a cofactor.

It catalyses the reaction O-phospho-L-serine + H2O = L-serine + phosphate. It carries out the reaction O-phospho-D-serine + H2O = D-serine + phosphate. Its pathway is amino-acid biosynthesis; L-serine biosynthesis; L-serine from 3-phospho-D-glycerate: step 3/3. This Wolinella succinogenes (strain ATCC 29543 / DSM 1740 / CCUG 13145 / JCM 31913 / LMG 7466 / NCTC 11488 / FDC 602W) (Vibrio succinogenes) protein is Phosphoserine phosphatase.